We begin with the raw amino-acid sequence, 331 residues long: Olfactory receptor 6S1 (331 aa).

The Extracellular portion of the chain corresponds to 1–29 (MSPDGNHSSDPTEFVLAGLPNLNSARVEL). An N-linked (GlcNAc...) asparagine glycan is attached at Asn6. Residues 30-50 (FSVFLLVYLLNLTGNVLIVGV) form a helical membrane-spanning segment. Residues 51-59 (VRADTRLQT) lie on the Cytoplasmic side of the membrane. The chain crosses the membrane as a helical span at residues 60 to 80 (PMYFFLGNLSCLEILLTSVII). Topologically, residues 81–99 (PKMLSNFLSRQHTISFAAC) are extracellular. A disulfide bridge links Cys99 with Cys182. Residues 100–120 (ITQFYFYFFLGASEFLLLAVM) form a helical membrane-spanning segment. Residues 121–147 (SADRYLAICHPLRYPLLMSGAVCFRVA) lie on the Cytoplasmic side of the membrane. The chain crosses the membrane as a helical span at residues 148-168 (LACWVGGLVPVLGPTVAVALL). The Extracellular segment spans residues 169–207 (PFCKQGAVVQHFFCDSGPLLRLACTNTKKLEETDFVLAS). Residues 208-228 (LVIVSSLLITAVSYGLIVLAV) traverse the membrane as a helical segment. At 229-242 (LSIPSASGRQKAFS) the chain is on the cytoplasmic side. A helical membrane pass occupies residues 243–263 (TCTSHLIVVTLFYGSAIFLYV). Residues 264–274 (RPSQSGSVDTN) are Extracellular-facing. Residues 275–295 (WAVTVITTFVTPLLNPFIYAL) form a helical membrane-spanning segment. The Cytoplasmic portion of the chain corresponds to 296–331 (RNEQVKEALKDMFRKVVAGVLGNLLLDKCLSEKAVK).

It belongs to the G-protein coupled receptor 1 family.

Its subcellular location is the cell membrane. Its function is as follows. Odorant receptor. In Homo sapiens (Human), this protein is Olfactory receptor 6S1 (OR6S1).